The primary structure comprises 205 residues: uncharacterized protein (205 aa).

Positions 11–71 (KTRRALVDAA…EMVDEAGLML (61 aa)) constitute an HTH tetR-type domain.

This is an uncharacterized protein from Haemophilus influenzae (strain ATCC 51907 / DSM 11121 / KW20 / Rd).